The sequence spans 203 residues: Auxin-responsive protein IAA4 (203 aa).

The segment at 1–31 (MEECKGGGMSPSSSMDSSTHPALSTTSSAAT) is disordered. A compositionally biased stretch (low complexity) spans 10–31 (SPSSSMDSSTHPALSTTSSAAT). The EAR-like (transcriptional repression) signature appears at 40–44 (LRLGL). The region spanning 108–202 (TLFVKVYMEG…KKLRIARMDK (95 aa)) is the PB1 domain.

The protein belongs to the Aux/IAA family. As to quaternary structure, homodimers and heterodimers.

It localises to the nucleus. Its function is as follows. Aux/IAA proteins are short-lived transcriptional factors that function as repressors of early auxin response genes at low auxin concentrations. The polypeptide is Auxin-responsive protein IAA4 (IAA4) (Oryza sativa subsp. japonica (Rice)).